The sequence spans 291 residues: tRNA U34 carboxymethyltransferase (291 aa).

Carboxy-S-adenosyl-L-methionine-binding positions include Lys61, Trp75, Lys80, Gly100, 122–124 (DPS), Tyr169, and Arg284.

It belongs to the class I-like SAM-binding methyltransferase superfamily. CmoB family. In terms of assembly, homotetramer.

The enzyme catalyses carboxy-S-adenosyl-L-methionine + 5-hydroxyuridine(34) in tRNA = 5-carboxymethoxyuridine(34) in tRNA + S-adenosyl-L-homocysteine + H(+). Its function is as follows. Catalyzes carboxymethyl transfer from carboxy-S-adenosyl-L-methionine (Cx-SAM) to 5-hydroxyuridine (ho5U) to form 5-carboxymethoxyuridine (cmo5U) at position 34 in tRNAs. This chain is tRNA U34 carboxymethyltransferase, found in Campylobacter lari (strain RM2100 / D67 / ATCC BAA-1060).